The sequence spans 486 residues: Cardiolipin synthase A (486 aa).

A run of 2 helical transmembrane segments spans residues 3 to 23 and 38 to 58; these read TFYT…IAGV and MAWL…YLSF. PLD phosphodiesterase domains lie at 219 to 246 and 399 to 426; these read MDLR…VDPR and EGGL…DMRS. Residues histidine 224, lysine 226, aspartate 231, histidine 404, lysine 406, and aspartate 411 contribute to the active site.

This sequence belongs to the phospholipase D family. Cardiolipin synthase subfamily. ClsA sub-subfamily.

It localises to the cell inner membrane. It carries out the reaction 2 a 1,2-diacyl-sn-glycero-3-phospho-(1'-sn-glycerol) = a cardiolipin + glycerol. In terms of biological role, catalyzes the reversible phosphatidyl group transfer from one phosphatidylglycerol molecule to another to form cardiolipin (CL) (diphosphatidylglycerol) and glycerol. The polypeptide is Cardiolipin synthase A (Citrobacter koseri (strain ATCC BAA-895 / CDC 4225-83 / SGSC4696)).